The chain runs to 949 residues: Sensor histidine kinase RcsC (949 aa).

Residues 1–19 (MKYLASFRTTLKASRYMFR) lie on the Cytoplasmic side of the membrane. Residues 20–41 (ALALVLWLLIAFSSVFYIVNAL) form a helical membrane-spanning segment. At 42-313 (HQRESEIRQE…PVDKVLERIR (272 aa)) the chain is on the periplasmic side. Residues 314 to 335 (MLILNAILLNVLAGAALFTLAR) traverse the membrane as a helical segment. Residues 336–949 (MYERRIFIPA…AERVRKSRDS (614 aa)) are Cytoplasmic-facing. The PAS domain maps to 357 to 425 (QFNRKIVASA…VLTSNNTNLQ (69 aa)). The Histidine kinase domain maps to 476 to 692 (TVSHELRTPL…QFTVRIPLYG (217 aa)). Histidine 479 is subject to Phosphohistidine; by autocatalysis. The region spanning 705-805 (SGKRCWLAVR…ARIYLIEMES (101 aa)) is the ABL domain. The Response regulatory domain maps to 826–940 (MILVVDDHPI…VIKQTLTLYA (115 aa)). Position 875 is a 4-aspartylphosphate (aspartate 875).

The protein belongs to the RcsC family. In terms of assembly, interacts with RcsD. Post-translationally, autophosphorylated. Activation probably requires a transfer of a phosphate group from a His in the transmitter domain to an Asp in the receiver domain.

Its subcellular location is the cell inner membrane. It carries out the reaction ATP + protein L-histidine = ADP + protein N-phospho-L-histidine.. With respect to regulation, the Rcs phosphorelay may be activated by RcsF. DjlA, LolA and OmpG might act as a regulator of the phosphorelay. Activity is probably up-regulated by YmgA/AriR, and possibly down-regulated by YcgZ, all 3 are connector proteins providing additional signal input into signaling system. Component of the Rcs signaling system, which controls transcription of numerous genes. RcsC functions as a membrane-associated protein kinase that phosphorylates RcsD in response to environmental signals. The phosphoryl group is then transferred to the response regulator RcsB. RcsC also has phosphatase activity. The system controls expression of genes involved in colanic acid capsule synthesis, biofilm formation and cell division. The chain is Sensor histidine kinase RcsC from Escherichia coli (strain K12).